The sequence spans 674 residues: Xaa-Pro aminopeptidase 2 (674 aa).

A signal peptide spans methionine 1–glycine 21. Residues asparagine 35, asparagine 49, and asparagine 65 are each glycosylated (N-linked (GlcNAc...) asparagine). Substrate is bound at residue arginine 116. Asparagine 278 and asparagine 291 each carry an N-linked (GlcNAc...) asparagine glycan. Histidine 430 serves as a coordination point for substrate. 3 residues coordinate Zn(2+): aspartate 450, aspartate 461, and histidine 524. Substrate contacts are provided by histidine 524, histidine 533, and glutamate 555. Positions 555 and 569 each coordinate Zn(2+). Alanine 649 carries GPI-anchor amidated alanine lipidation. The propeptide at alanine 650–valine 674 is removed in mature form.

This sequence belongs to the peptidase M24B family. Homotrimer. Zn(2+) serves as cofactor. N-glycosylated. Expressed in kidney, lung, heart, placenta, liver, small intestine and colon. No expression in brain, skeletal muscle, pancreas, spleen, thymus, prostate, testis and ovary.

The protein localises to the cell membrane. The enzyme catalyses Release of any N-terminal amino acid, including proline, that is linked to proline, even from a dipeptide or tripeptide.. With respect to regulation, inhibited by apstatin and the chelating agent 1,10-phenanthroline. Also inhibited by high concentrations of Zn(2+). Not significantly inhibited by bestatin or phosphoramidon. Membrane-bound metalloprotease which catalyzes the removal of a penultimate prolyl residue from the N-termini of peptides, such as Arg-Pro-Pro. May play a role in the metabolism of the vasodilator bradykinin. The protein is Xaa-Pro aminopeptidase 2 (XPNPEP2) of Homo sapiens (Human).